Reading from the N-terminus, the 251-residue chain is Ribonuclease PH (251 aa).

Residues arginine 87 and 125 to 127 (GTR) each bind phosphate.

This sequence belongs to the RNase PH family. As to quaternary structure, homohexameric ring arranged as a trimer of dimers.

It carries out the reaction tRNA(n+1) + phosphate = tRNA(n) + a ribonucleoside 5'-diphosphate. In terms of biological role, phosphorolytic 3'-5' exoribonuclease that plays an important role in tRNA 3'-end maturation. Removes nucleotide residues following the 3'-CCA terminus of tRNAs; can also add nucleotides to the ends of RNA molecules by using nucleoside diphosphates as substrates, but this may not be physiologically important. Probably plays a role in initiation of 16S rRNA degradation (leading to ribosome degradation) during starvation. This is Ribonuclease PH from Saccharopolyspora erythraea (strain ATCC 11635 / DSM 40517 / JCM 4748 / NBRC 13426 / NCIMB 8594 / NRRL 2338).